The primary structure comprises 382 residues: Chaperone protein DnaJ (382 aa).

The J domain occupies 5–70 (DYYEVLGLKK…QKRAAYDQYG (66 aa)). The segment at 134–212 (GTTKDIQINT…CHGEGRVHKK (79 aa)) adopts a CR-type zinc-finger fold. Residues C147, C150, C164, C167, C186, C189, C200, and C203 each contribute to the Zn(2+) site. CXXCXGXG motif repeat units follow at residues 147–154 (CDSCGGSG), 164–171 (CPHCHGSG), 186–193 (CPSCHGSG), and 200–207 (CRSCHGEG).

The protein belongs to the DnaJ family. As to quaternary structure, homodimer. The cofactor is Zn(2+).

The protein localises to the cytoplasm. Participates actively in the response to hyperosmotic and heat shock by preventing the aggregation of stress-denatured proteins and by disaggregating proteins, also in an autonomous, DnaK-independent fashion. Unfolded proteins bind initially to DnaJ; upon interaction with the DnaJ-bound protein, DnaK hydrolyzes its bound ATP, resulting in the formation of a stable complex. GrpE releases ADP from DnaK; ATP binding to DnaK triggers the release of the substrate protein, thus completing the reaction cycle. Several rounds of ATP-dependent interactions between DnaJ, DnaK and GrpE are required for fully efficient folding. Also involved, together with DnaK and GrpE, in the DNA replication of plasmids through activation of initiation proteins. This is Chaperone protein DnaJ from Haemophilus influenzae (strain PittGG).